The chain runs to 263 residues: Methylesterase 4 (263 aa).

Residue S84 is the Acyl-ester intermediate of the active site. Active-site charge relay system residues include D213 and H241.

Belongs to the AB hydrolase superfamily. Methylesterase family.

The catalysed reaction is methyl salicylate + H2O = salicylate + methanol + H(+). Its pathway is plant hormone biosynthesis. With respect to regulation, esterase activity is down-regulated by salicylic acid (SA). Functionally, methylesterase shown to have carboxylesterase activity and methyl salicylate (MeSA) esterase activity in vitro. The chain is Methylesterase 4 from Arabidopsis thaliana (Mouse-ear cress).